We begin with the raw amino-acid sequence, 599 residues long: Pentatricopeptide repeat-containing protein At3g62470, mitochondrial (599 aa).

The N-terminal 99 residues, 1-99, are a transit peptide targeting the mitochondrion; sequence MAAAPWLHLS…RGFSSGSSNV (99 aa). PPR repeat units lie at residues 194-228, 230-262, 263-293, 297-331, 332-366, 367-401, 402-436, 437-471, 472-506, and 507-541; these read DSRTYNSMMSILAKTRQFETMVSVLEEMGTKGLLT, ETFTIAMKAFAAAKERKKAVGIFELMKKYKFKI, GVETINCLLDSLGRAKLGKEAQVLFDKLKER, NMMTYTVLLNGWCRVRNLIEAARIWNDMIDQGLKP, DIVAHNVMLEGLLRSRKKSDAIKLFHVMKSKGPCP, NVRSYTIMIRDFCKQSSMETAIEYFDDMVDSGLQP, DAAVYTCLITGFGTQKKLDTVYELLKEMQEKGHPP, DGKTYNALIKLMANQKMPEHATRIYNKMIQNEIEP, SIHTFNMIMKSYFMARNYEMGRAVWEEMIKKGICP, and DDNSYTVLIRGLIGEGKSREACRYLEEMLDKGMKT.

This sequence belongs to the PPR family. P subfamily.

Its subcellular location is the mitochondrion. In Arabidopsis thaliana (Mouse-ear cress), this protein is Pentatricopeptide repeat-containing protein At3g62470, mitochondrial.